Here is a 1960-residue protein sequence, read N- to C-terminus: Transcription factor 20 (1960 aa).

The segment covering 1 to 18 (MQSFREQSSYHGNQQSYP) has biased composition (polar residues). The tract at residues 1-287 (MQSFREQSSY…GSNAQAYGTQ (287 aa)) is disordered. Gly residues predominate over residues 42–60 (GGTGGSSGSSGSGSGGGRR). Residue arginine 60 is modified to Omega-N-methylarginine. Low complexity predominate over residues 61–75 (GAAAAAAAMASETSG). The span at 122 to 131 (QGSSFGNQYG) shows a compositional bias: polar residues. Positions 164–192 (SAQYQQQASSQQQQQQVQQLRQQLYQSHQ) are enriched in low complexity. The span at 193–219 (PLPQATGQPASSSSHLQPMQRPSTLPS) shows a compositional bias: polar residues. Positions 236–259 (QSSASSSSSSSFPSPQRFSQSGQS) are enriched in low complexity. Polar residues-rich tracts occupy residues 260–270 (YDGSYNVNAGS) and 277–287 (VGSNAQAYGTQ). Residue lysine 304 forms a Glycyl lysine isopeptide (Lys-Gly) (interchain with G-Cter in SUMO2) linkage. Disordered stretches follow at residues 305-328 (IPQG…SQHV) and 360-392 (FHQN…LMQT). Low complexity-rich tracts occupy residues 306-322 (PQGT…QQQQ) and 368-388 (SNPS…TPSP). A phosphoserine mark is found at serine 419 and serine 430. The tract at residues 476–748 (SDALTPQKKT…HGERKGRNEK (273 aa)) is disordered. Composition is skewed to polar residues over residues 497 to 508 (SCTNSEGSSQPE) and 537 to 547 (LSGQSTSSDTT). Phosphoserine is present on residues serine 538, serine 559, serine 574, and serine 583. Lysine 602 bears the N6-acetyllysine mark. Basic and acidic residues predominate over residues 616-628 (RVEKPGGQDKGSQ). Position 640 is a phosphoserine (serine 640). Positions 665 to 677 (GNKNGDNNSNHNG) are enriched in low complexity. Residues 693-702 (TSRTEPSKSP) show a composition bias toward polar residues. Glycyl lysine isopeptide (Lys-Gly) (interchain with G-Cter in SUMO2) cross-links involve residues lysine 710, lysine 733, lysine 748, lysine 823, lysine 832, and lysine 844. The span at 732–748 (EKGDFTGHGERKGRNEK) shows a compositional bias: basic and acidic residues. A Phosphoserine modification is found at serine 871. Residues lysine 920 and lysine 922 each participate in a glycyl lysine isopeptide (Lys-Gly) (interchain with G-Cter in SUMO2) cross-link. The disordered stretch occupies residues 920–1037 (KLKSQSGQIK…GDPHHMNPHM (118 aa)). Lysine 929 is covalently cross-linked (Glycyl lysine isopeptide (Lys-Gly) (interchain with G-Cter in SUMO1); alternate). Residue lysine 929 forms a Glycyl lysine isopeptide (Lys-Gly) (interchain with G-Cter in SUMO2); alternate linkage. Residues 936–945 (SKSQASFNNK) show a composition bias toward polar residues. The segment covering 946–961 (KSGDHCHPPSIKHESY) has biased composition (basic and acidic residues). A Glycyl lysine isopeptide (Lys-Gly) (interchain with G-Cter in SUMO2) cross-link involves residue lysine 957. Serine 966 and serine 1005 each carry phosphoserine. A Glycyl lysine isopeptide (Lys-Gly) (interchain with G-Cter in SUMO2) cross-link involves residue lysine 1015. The residue at position 1024 (arginine 1024) is an Omega-N-methylarginine. Residue serine 1053 is modified to Phosphoserine. Glycyl lysine isopeptide (Lys-Gly) (interchain with G-Cter in SUMO2) cross-links involve residues lysine 1086, lysine 1098, lysine 1137, lysine 1173, lysine 1178, lysine 1183, lysine 1210, lysine 1231, lysine 1267, and lysine 1274. 3 disordered regions span residues 1110-1142 (AAAQ…DKDG), 1162-1285 (RCLM…GRLL), and 1303-1331 (SHSQ…CPAV). Basic and acidic residues predominate over residues 1130–1142 (DRVRSPLKNDKDG). The interval 1170–1191 (LPNKGMELKHGSQKLQESCWDL) is leucine-zipper. The short motif at 1254-1268 (RRRVRSFISPIPSKR) is the Nuclear localization signal element. Residues 1304–1318 (HSQDIKSIPKRDSSK) are compositionally biased toward basic and acidic residues. Serine 1305 is modified (phosphoserine). A Glycyl lysine isopeptide (Lys-Gly) (interchain with G-Cter in SUMO2) cross-link involves residue lysine 1309. Serine 1335 bears the Phosphoserine mark. Residue lysine 1338 forms a Glycyl lysine isopeptide (Lys-Gly) (interchain with G-Cter in SUMO2) linkage. At serine 1361 the chain carries Phosphoserine. The interval 1384 to 1607 (DILSLKSGPP…TKQAVPIVEP (224 aa)) is disordered. Residues lysine 1389, lysine 1409, lysine 1428, and lysine 1446 each participate in a glycyl lysine isopeptide (Lys-Gly) (interchain with G-Cter in SUMO2) cross-link. Residues 1424 to 1451 (LHVEKPLPRSSEEWRGSVDDKVKTETHA) show a composition bias toward basic and acidic residues. Over residues 1464-1477 (MTSTTSQKPGSNQG) the composition is skewed to polar residues. Lysine 1510 is covalently cross-linked (Glycyl lysine isopeptide (Lys-Gly) (interchain with G-Cter in SUMO2)). Position 1522 is a phosphoserine (serine 1522). A Glycyl lysine isopeptide (Lys-Gly) (interchain with G-Cter in SUMO2) cross-link involves residue lysine 1524. Positions 1537-1551 (GKKKGRPIGSVNKQK) form a DNA-binding region, a.T hook. Residues 1555–1566 (QPPPPPPQPPQI) are compositionally biased toward pro residues. The short motif at 1576 to 1600 (KPKKQRQRRERRKPGAQPRKRKTKQ) is the Nuclear localization signal element. Residues 1578–1599 (KKQRQRRERRKPGAQPRKRKTK) show a composition bias toward basic residues. Residue lysine 1613 forms a Glycyl lysine isopeptide (Lys-Gly) (interchain with G-Cter in SUMO2) linkage. 2 disordered regions span residues 1660–1683 (LVRG…KALP) and 1732–1839 (TLPK…PELE). Serine 1669 carries the phosphoserine modification. Phosphothreonine is present on residues threonine 1671, threonine 1762, and threonine 1764. The Nuclear localization signal motif lies at 1785 to 1792 (RFKRRHRS). Residues 1829 to 1865 (PTTSEGGPELELQIPELPLDSNEFWVHEGCILWANGI) form a C2HC pre-PHD-type; degenerate zinc finger. The PHD-type zinc finger occupies 1885-1933 (MKCSHCQEAGATLGCYNKGCSFRYHYPCAIDADCLLHEENFSVRCPKHK). Residues 1939–1960 (PLPPLQNKTAKGSLSTEQSERG) form a disordered region. A compositionally biased stretch (polar residues) spans 1944-1960 (QNKTAKGSLSTEQSERG).

Homodimer. Interacts with RNF4 and JUN. As to expression, expressed in most tissues, except in ovary and prostate. Isoform 1 is exclusively expressed in brain, heart and testis, and this form predominates in liver and kidney. Isoform 2 predominates in lung.

It localises to the nucleus. Functionally, transcriptional activator that binds to the regulatory region of MMP3 and thereby controls stromelysin expression. It stimulates the activity of various transcriptional activators such as JUN, SP1, PAX6 and ETS1, suggesting a function as a coactivator. This chain is Transcription factor 20 (TCF20), found in Homo sapiens (Human).